Reading from the N-terminus, the 1049-residue chain is Protein phosphatase 1 regulatory subunit 12A (1049 aa).

6 ANK repeats span residues 39 to 68 (DDGAVFLAACSSGDTEEVLRMLDRGADINY), 72 to 101 (DGLTALHQACIDDNVDMVTFLVEHGACINQ), 105 to 134 (EGWIPLHAAASCGYLDIAEYLISQGASVGV), 138 to 164 (EGETPLDIAEEEAMEELLQNEINRQGV), 198 to 227 (SGGTALHVAAAKGYAEVLKLLIQAGYDVNI), and 231 to 260 (DGWTPLHAAAHWGKEEACRILVEHLCDMDV). Residues 302-947 (LIETTTTGDN…RPYSRFEKDD (646 aa)) form a disordered region. Over residues 303-315 (IETTTTGDNNQSV) the composition is skewed to polar residues. The span at 319–341 (KSKETLLLEPEKTAPRIETLEPE) shows a compositional bias: basic and acidic residues. The segment covering 359–371 (SEEEEEEDSESEN) has biased composition (acidic residues). A compositionally biased stretch (low complexity) spans 378–421 (SSVPSSVSNSTPTTAPSSITVTSPTTPSNQVTTPTSPTKKVSTP). A compositionally biased stretch (basic and acidic residues) spans 426-436 (SPKEEDRKDES). Residues 473–484 (RSASSPRLSSSL) show a composition bias toward low complexity. Over residues 485–497 (DNKDKEKEKEKTR) the composition is skewed to basic and acidic residues. Residues 545 to 564 (SDGTASTNRTSSYQRSTSHT) show a composition bias toward polar residues. The span at 571–592 (SSSRDLPAKSSSASSLEPNNSK) shows a compositional bias: low complexity. Positions 593-607 (AWQPSSYYQSYSIHR) are enriched in polar residues. Over residues 620–639 (SSTSSSTTTTTTTSSVTSPT) the composition is skewed to low complexity. Residues 649 to 664 (WAEESAEKEKEKEKES) are compositionally biased toward basic and acidic residues. A compositionally biased stretch (low complexity) spans 665-686 (ATVIPTINTAGTTTTTSTTGTV). The segment covering 702–711 (VRDEESESQR) has biased composition (basic and acidic residues). The span at 712 to 722 (KARSRQARQSR) shows a compositional bias: basic residues. The segment covering 747–789 (RPREDEKEEKEKQDKEKQEEKKETETKEDDYRSRYRSFEEKYR) has biased composition (basic and acidic residues). Over residues 790-819 (TSLASSTTASSTIPSSSSSSSSSLYSTSSL) the composition is skewed to low complexity. Polar residues predominate over residues 820–829 (NRPNSLTGLT). A compositionally biased stretch (basic and acidic residues) spans 835-863 (STRDTDRESDRKEKDEDRDGDDKSQPRSI). Over residues 864-875 (RDRRRPREKRRS) the composition is skewed to basic residues. Composition is skewed to basic and acidic residues over residues 890–906 (PDHPSDSEGSTKGEPQS) and 934–947 (GESRRPYSRFEKDD).

In terms of assembly, PP1 comprises a catalytic subunit, and one or several targeting or regulatory subunits. Ppp1r12a mediates binding to myosin.

The protein localises to the cytoplasm. Its function is as follows. Regulates myosin phosphatase activity. This Danio rerio (Zebrafish) protein is Protein phosphatase 1 regulatory subunit 12A (ppp1r12a).